Reading from the N-terminus, the 560-residue chain is MWHVFSQYTLIFLLLIVIAVPLGKYLYVAFFEKGKIDRFFSPIEAVIYRLSGIRSLEEMTWKSYCTALLIVNAALLGISYGLLRIQHYLPLNGAKVENMEPTLTFNTVVSFMTNTNLQHYSGESGLSILSQMLFVTMMMFTSAATGLTVATALIRALSKKGKTIGNFYQDFVRANVRVLLPLSVIVTILLVAFGVPQTFLARMAVSTLEGGTQTLALGPVASLESIKHLGTNGGGFFGANSSHPFENPHPFTNVIEMLSMWCIPAALPFTYGHAVKNRKQGWVLFATMFVLFVMMLGVVYNAEQSGNPLVGKSGFAADQGNMEGKEVRFGIPLSSLFTAITTAATTGSVNNMHDSLTPIGGLVPLALMMLNNVFGGDGVGFVNIMMYAMIAVFLSGLMVGRTPEFLGRKIEPKEMKLIVIALLLHPLIILAPSAIALMTHMGTEAISNPGFHGISQVVYEYTSSAANNGSGFEGLKDNTAFWNISTGVVMLLGRYVSIIAMLAVAGSLVGKQPVPETIGTFRTDTATFGVILFGTVFIIGALTFFPVLILGPVAEYLTIR.

Helical transmembrane passes span 11-31 (IFLL…VAFF), 63-83 (SYCT…YGLL), 134-154 (FVTM…TALI), 179-199 (LLPL…PQTF), 254-274 (VIEM…YGHA), 282-302 (WVLF…VYNA), 329-349 (FGIP…TGSV), 356-376 (LTPI…VFGG), 379-399 (VGFV…GLMV), 417-437 (LIVI…AIAL), 488-508 (VVML…AGSL), and 530-550 (VILF…VLIL).

The protein belongs to the KdpA family. As to quaternary structure, the system is composed of three essential subunits: KdpA, KdpB and KdpC.

It localises to the cell membrane. Functionally, part of the high-affinity ATP-driven potassium transport (or Kdp) system, which catalyzes the hydrolysis of ATP coupled with the electrogenic transport of potassium into the cytoplasm. This subunit binds the extracellular potassium ions and delivers the ions to the membrane domain of KdpB through an intramembrane tunnel. The polypeptide is Potassium-transporting ATPase potassium-binding subunit (Geobacillus kaustophilus (strain HTA426)).